The primary structure comprises 360 residues: Glutamate 5-kinase (360 aa).

Residue Lys-7 participates in ATP binding. Residues Ser-47, Asp-134, and Asn-146 each contribute to the substrate site. ATP is bound by residues 166–167 (TD) and 210–216 (TGGISTK). In terms of domain architecture, PUA spans 275 to 356 (VGKITLDDGA…SSIIVVHRDV (82 aa)).

This sequence belongs to the glutamate 5-kinase family.

The protein localises to the cytoplasm. The catalysed reaction is L-glutamate + ATP = L-glutamyl 5-phosphate + ADP. It participates in amino-acid biosynthesis; L-proline biosynthesis; L-glutamate 5-semialdehyde from L-glutamate: step 1/2. Functionally, catalyzes the transfer of a phosphate group to glutamate to form L-glutamate 5-phosphate. The polypeptide is Glutamate 5-kinase (Prochlorococcus marinus (strain AS9601)).